Here is a 127-residue protein sequence, read N- to C-terminus: Translation initiation factor 5A (127 aa).

Lys35 carries the hypusine modification.

The protein belongs to the eIF-5A family.

The protein localises to the cytoplasm. In terms of biological role, functions by promoting the formation of the first peptide bond. In Methanothrix thermoacetophila (strain DSM 6194 / JCM 14653 / NBRC 101360 / PT) (Methanosaeta thermophila), this protein is Translation initiation factor 5A (eIF5A).